The sequence spans 114 residues: Large ribosomal subunit protein uL18 (114 aa).

Belongs to the universal ribosomal protein uL18 family. As to quaternary structure, part of the 50S ribosomal subunit; part of the 5S rRNA/L5/L18/L25 subcomplex. Contacts the 5S and 23S rRNAs.

In terms of biological role, this is one of the proteins that bind and probably mediate the attachment of the 5S RNA into the large ribosomal subunit, where it forms part of the central protuberance. The sequence is that of Large ribosomal subunit protein uL18 from Azobacteroides pseudotrichonymphae genomovar. CFP2.